We begin with the raw amino-acid sequence, 180 residues long: Adenine phosphoribosyltransferase (180 aa).

This sequence belongs to the purine/pyrimidine phosphoribosyltransferase family. As to quaternary structure, homodimer.

It is found in the cytoplasm. It carries out the reaction AMP + diphosphate = 5-phospho-alpha-D-ribose 1-diphosphate + adenine. It participates in purine metabolism; AMP biosynthesis via salvage pathway; AMP from adenine: step 1/1. In terms of biological role, catalyzes a salvage reaction resulting in the formation of AMP, that is energically less costly than de novo synthesis. In Haemophilus influenzae (strain PittEE), this protein is Adenine phosphoribosyltransferase.